We begin with the raw amino-acid sequence, 244 residues long: Phosphoadenosine 5'-phosphosulfate reductase (244 aa).

The active-site Nucleophile; cysteine thiosulfonate intermediate is cysteine 239.

The protein belongs to the PAPS reductase family. CysH subfamily.

The protein localises to the cytoplasm. The enzyme catalyses [thioredoxin]-disulfide + sulfite + adenosine 3',5'-bisphosphate + 2 H(+) = [thioredoxin]-dithiol + 3'-phosphoadenylyl sulfate. The protein operates within sulfur metabolism; hydrogen sulfide biosynthesis; sulfite from sulfate: step 3/3. In terms of biological role, catalyzes the formation of sulfite from phosphoadenosine 5'-phosphosulfate (PAPS) using thioredoxin as an electron donor. In Salmonella dublin (strain CT_02021853), this protein is Phosphoadenosine 5'-phosphosulfate reductase.